Here is a 483-residue protein sequence, read N- to C-terminus: Glutamyl-tRNA(Gln) amidotransferase subunit A (483 aa).

Residues lysine 75 and serine 150 each act as charge relay system in the active site. Serine 174 (acyl-ester intermediate) is an active-site residue.

Belongs to the amidase family. GatA subfamily. As to quaternary structure, heterotrimer of A, B and C subunits.

It carries out the reaction L-glutamyl-tRNA(Gln) + L-glutamine + ATP + H2O = L-glutaminyl-tRNA(Gln) + L-glutamate + ADP + phosphate + H(+). In terms of biological role, allows the formation of correctly charged Gln-tRNA(Gln) through the transamidation of misacylated Glu-tRNA(Gln) in organisms which lack glutaminyl-tRNA synthetase. The reaction takes place in the presence of glutamine and ATP through an activated gamma-phospho-Glu-tRNA(Gln). This is Glutamyl-tRNA(Gln) amidotransferase subunit A from Legionella pneumophila subsp. pneumophila (strain Philadelphia 1 / ATCC 33152 / DSM 7513).